A 393-amino-acid chain; its full sequence is Pre-mRNA-splicing regulator WTAP (393 aa).

The tract at residues 242 to 393 is disordered; it reads QIQISGNRTP…SSVNVQGSVL (152 aa). Over residues 254–267 the composition is skewed to basic and acidic residues; it reads EPKDEGETSGKDCG. 2 stretches are compositionally biased toward polar residues: residues 272-286 and 321-353; these read GPSN…THSS and DGSS…SNDT. Residues 354 to 365 are compositionally biased toward basic and acidic residues; sequence DSNHDSQEEKPV. A compositionally biased stretch (polar residues) spans 369–393; sequence GNRTVSSRHLQNGLDSSVNVQGSVL.

This sequence belongs to the fl(2)d family. Component of the WMM complex, a N6-methyltransferase complex composed of a catalytic subcomplex, named MAC, and of an associated subcomplex, named MACOM. Component of the MACOM subcomplex.

The protein localises to the nucleus speckle. The protein resides in the nucleus. It localises to the nucleoplasm. Associated component of the WMM complex, a complex that mediates N6-methyladenosine (m6A) methylation of RNAs, a modification that plays a role in the efficiency of mRNA splicing and RNA processing. In Xenopus laevis (African clawed frog), this protein is Pre-mRNA-splicing regulator WTAP.